The chain runs to 665 residues: Ion-translocating oxidoreductase complex subunit C (665 aa).

4Fe-4S ferredoxin-type domains are found at residues 368–398 and 408–437; these read EYAEPEAEQACIRCSSCSDACPVNLMPQQLY and KSEEYALKDCIECGICAYVCPSHIPLIQYF. Cys-378, Cys-381, Cys-384, Cys-388, Cys-417, Cys-420, Cys-423, and Cys-427 together coordinate [4Fe-4S] cluster. Composition is skewed to basic and acidic residues over residues 465–477 and 485–513; these read QARMEREEQERKA and ARREELAQTKGEDPVKAALERLKAKKANE. Disordered regions lie at residues 465-568, 580-623, and 637-665; these read QARM…DAKK, AKKL…LDPK, and KKLAQANSTSEAISNSQTAENEVEKQIVR. Polar residues-rich tracts occupy residues 554–564 and 585–600; these read VENQEQQTQPT and QTNSTSEAISNSQTAE. Over residues 602–615 the composition is skewed to basic and acidic residues; sequence EVEKTKSAVEKTEE. Polar residues predominate over residues 643–656; the sequence is NSTSEAISNSQTAE.

The protein belongs to the 4Fe4S bacterial-type ferredoxin family. RnfC subfamily. In terms of assembly, the complex is composed of six subunits: RnfA, RnfB, RnfC, RnfD, RnfE and RnfG. [4Fe-4S] cluster serves as cofactor.

Its subcellular location is the cell inner membrane. Functionally, part of a membrane-bound complex that couples electron transfer with translocation of ions across the membrane. This is Ion-translocating oxidoreductase complex subunit C from Haemophilus influenzae (strain 86-028NP).